A 277-amino-acid polypeptide reads, in one-letter code: Ribosomal RNA small subunit methyltransferase A (277 aa).

S-adenosyl-L-methionine is bound by residues histidine 20, leucine 22, glycine 47, glutamate 71, aspartate 94, and asparagine 116.

Belongs to the class I-like SAM-binding methyltransferase superfamily. rRNA adenine N(6)-methyltransferase family. RsmA subfamily.

It localises to the cytoplasm. It carries out the reaction adenosine(1518)/adenosine(1519) in 16S rRNA + 4 S-adenosyl-L-methionine = N(6)-dimethyladenosine(1518)/N(6)-dimethyladenosine(1519) in 16S rRNA + 4 S-adenosyl-L-homocysteine + 4 H(+). Specifically dimethylates two adjacent adenosines (A1518 and A1519) in the loop of a conserved hairpin near the 3'-end of 16S rRNA in the 30S particle. May play a critical role in biogenesis of 30S subunits. The chain is Ribosomal RNA small subunit methyltransferase A from Burkholderia sp.